A 163-amino-acid polypeptide reads, in one-letter code: Epididymal-specific lipocalin-6 (163 aa).

An N-terminal signal peptide occupies residues 1–20 (MGGLLLAAFLALVSVPRAQA).

This sequence belongs to the calycin superfamily. Lipocalin family. In terms of tissue distribution, predominantly expressed in epididymis.

Its subcellular location is the secreted. Functionally, may play a role in male fertility. This Homo sapiens (Human) protein is Epididymal-specific lipocalin-6 (LCN6).